A 739-amino-acid polypeptide reads, in one-letter code: Catalase-peroxidase 2 (739 aa).

Residues 1 to 26 (MKKTTIPTLSALTLAMSLAFGGAAIA) form the signal peptide. Residues 105-227 (WHSAGVYRIF…MGATQMGLIY (123 aa)) constitute a cross-link (tryptophyl-tyrosyl-methioninium (Trp-Tyr) (with M-253)). Catalysis depends on His106, which acts as the Proton acceptor. Residues 227–253 (YVNPEGPNGVPDPLASAKEIRDTFGRM) constitute a cross-link (tryptophyl-tyrosyl-methioninium (Tyr-Met) (with W-105)). His268 is a heme b binding site.

Belongs to the peroxidase family. Peroxidase/catalase subfamily. As to quaternary structure, homodimer or homotetramer. The cofactor is heme b. Formation of the three residue Trp-Tyr-Met cross-link is important for the catalase, but not the peroxidase activity of the enzyme.

It catalyses the reaction H2O2 + AH2 = A + 2 H2O. The catalysed reaction is 2 H2O2 = O2 + 2 H2O. Its function is as follows. Bifunctional enzyme with both catalase and broad-spectrum peroxidase activity. This chain is Catalase-peroxidase 2, found in Shewanella sp. (strain MR-4).